The chain runs to 118 residues: V-type proton ATPase subunit G 3 (118 aa).

The stretch at 3 to 54 (SQSQGIQQLLQAEKRAKDKLEEAKKRKNKRLRQAKEEATADIDQYRLKREAD) forms a coiled coil. A disordered region spans residues 19–39 (KDKLEEAKKRKNKRLRQAKEE).

This sequence belongs to the V-ATPase G subunit family. In terms of assembly, V-ATPase is a heteromultimeric enzyme made up of two complexes: the ATP-hydrolytic V1 complex and the proton translocation V0 complex. The V1 complex consists of three catalytic AB heterodimers that form a heterohexamer, three peripheral stalks each consisting of EG heterodimers, one central rotor including subunits D and F, and the regulatory subunits C and H. The proton translocation complex V0 consists of the proton transport subunit a, a ring of proteolipid subunits c9c'', rotary subunit d, subunits e and f, and two accessory subunits.

In terms of biological role, subunit of the V1 complex of vacuolar(H+)-ATPase (V-ATPase), a multisubunit enzyme composed of a peripheral complex (V1) that hydrolyzes ATP and a membrane integral complex (V0) that translocates protons. V-ATPase is responsible for acidifying and maintaining the pH of intracellular compartments and in some cell types, is targeted to the plasma membrane, where it is responsible for acidifying the extracellular environment. This Xenopus laevis (African clawed frog) protein is V-type proton ATPase subunit G 3 (atp6v1g3).